Reading from the N-terminus, the 402-residue chain is Bisdemethoxycurcumin synthase (402 aa).

Catalysis depends on cysteine 174, which acts as the Acyl-thioester intermediate.

The protein belongs to the thiolase-like superfamily. Chalcone/stilbene synthases family. As to quaternary structure, homodimer.

The catalysed reaction is 2 4-coumaroyl-CoA + malonyl-CoA + H2O + H(+) = bisdemethoxycurcumin + 2 CO2 + 3 CoA. It functions in the pathway secondary metabolite biosynthesis; flavonoid biosynthesis. Plant-specific type III polyketide synthase (PKS) that catalyzes the one-pot formation of the C6-C7-C6 diarylheptanoid scaffold of bisdemethoxycurcumin by the condensation of two molecules of 4-coumaroyl-CoA and one molecule of malonyl-CoA. This Oryza sativa subsp. japonica (Rice) protein is Bisdemethoxycurcumin synthase.